The following is a 381-amino-acid chain: Alkanesulfonate monooxygenase (381 aa).

This sequence belongs to the SsuD family. Homotetramer.

It catalyses the reaction an alkanesulfonate + FMNH2 + O2 = an aldehyde + FMN + sulfite + H2O + 2 H(+). In terms of biological role, catalyzes the desulfonation of aliphatic sulfonates. In Citrobacter koseri (strain ATCC BAA-895 / CDC 4225-83 / SGSC4696), this protein is Alkanesulfonate monooxygenase.